Reading from the N-terminus, the 206-residue chain is 2,3-bisphosphoglycerate-dependent phosphoglycerate mutase (206 aa).

Substrate contacts are provided by residues 9–16, 22–23, Arg-61, 88–91, Lys-99, 115–116, and 159–160; these read RHGQSEWN, TG, ERDY, RR, and GN. The active-site Tele-phosphohistidine intermediate is the His-10. The Proton donor/acceptor role is filled by Glu-88.

This sequence belongs to the phosphoglycerate mutase family. BPG-dependent PGAM subfamily. In terms of assembly, homodimer.

The catalysed reaction is (2R)-2-phosphoglycerate = (2R)-3-phosphoglycerate. It functions in the pathway carbohydrate degradation; glycolysis; pyruvate from D-glyceraldehyde 3-phosphate: step 3/5. Functionally, catalyzes the interconversion of 2-phosphoglycerate and 3-phosphoglycerate. The sequence is that of 2,3-bisphosphoglycerate-dependent phosphoglycerate mutase from Bartonella quintana (strain Toulouse) (Rochalimaea quintana).